The sequence spans 840 residues: MVKEKKKADKKGDKSARSPSSPSDYPEFAKQDGNAPRQDASPSAAPALDVQPKDPGVKREVKSESLPNEDTTQYEEPVLTKLIVESYEGEKVRGLYEGEGFAIFQGGCTYQGMFSEGLMHGQGTYIWADGLKYEGDFVKNIPMNHGIFTWPDGSTYEGEVVGGMRHGFGMFKCSTQPVSYIGHWCHGKRHGKGSIYYNQEGTSWYEGDWIHNIRKGWGIRCYKSGNIYEGQWENNVRHGEGRMRWLTTNEEYTGQWKHGVQNGLGTHTWFLKRIPYSQYPLRNEYVGEFVNGYRHGHGKFYYASGAMYEGEWVSNKKHGMGRLTFKNGRVYDGPFSKDHMVAFPNLEGEVMSYPDSTSECAFGCQWCRPSASAEIMRKLDGNESNSLLGSSLELDLSLLLKMYPERDQSEEKKQVEYAILRNITELRRIYNFYSSLGCDRSLDNTFLMTKLHFWRFLKDCKFHHHNITLADMDRVLGANNDIPVEEIHSPFTTLLLRTFLNYLLQLAYHIHHKEYQDRSPSLFLCFKKLMNENIRPNACRVKGRLFCEAQRTLYSMTYVDKCWEIYTAHCRPNAAPPHELTMSTRHFLWMLRSFKIINKELTATKFVEVIAEDNPSMYDGIDSNFELELVFLEFFEALLSFALICVPEPPTKFCSDFPNDDLSVNKAGSTYPVTAQNTQNRSPSAVASQESDIQFSSTKSSSSKLGVLVDISKIRKSEPKIKKSVSDGTTSKVNFKSAGKGLTFLLSQSAHKHEETLKEKVKENRLHNEAMALQRKMENEELEARLNSLREEEAKRQDYEVDITVIKEPVDAPSSSFTPSPPKEDTVVSSKSITSKKKKK.

2 stretches are compositionally biased toward basic and acidic residues: residues 1-16 (MVKE…DKSA) and 51-63 (QPKD…EVKS). Residues 1–74 (MVKEKKKADK…SLPNEDTTQY (74 aa)) are disordered. MORN repeat units follow at residues 86 to 108 (SYEG…QGGC), 109 to 131 (TYQG…ADGL), 132 to 154 (KYEG…PDGS), 155 to 177 (TYEG…STQP), 179 to 201 (SYIG…NQEG), 204 to 226 (WYEG…KSGN), 227 to 249 (IYEG…LTTN), 251 to 273 (EYTG…FLKR), 284 to 306 (EYVG…ASGA), and 307 to 329 (MYEG…KNGR). Residues 758-801 (KEKVKENRLHNEAMALQRKMENEELEARLNSLREEEAKRQDYEV) adopt a coiled-coil conformation. The segment at 810–840 (VDAPSSSFTPSPPKEDTVVSSKSITSKKKKK) is disordered.

As to quaternary structure, interacts with RSPH6A. Does not appear to be part of the axonemal radial spoke complexes 1 or 2.

It is found in the cytoplasm. Its subcellular location is the cytoskeleton. It localises to the cilium axoneme. The protein localises to the cell projection. The protein resides in the cilium. It is found in the flagellum. May function as part of the axonemal radial spoke complex 3 (RS3). Radial spoke complexes are important for ciliary motility. The sequence is that of Radial spoke head 10 homolog B (RSPH10B) from Bos taurus (Bovine).